The sequence spans 840 residues: 9-beta-pimara-7,15-diene synthase, chloroplastic (840 aa).

The transit peptide at 1-56 directs the protein to the chloroplast; that stretch reads MASPMEAVARSSLVLAPRRRRALGLLPAAAAPFVLDCRRRHNGGMRRPHVSFACSA. Residues D589, D593, N733, S737, and E741 each contribute to the Mg(2+) site. The short motif at 589-593 is the DDXXD motif element; sequence DDFFD.

The protein belongs to the terpene synthase family. Mg(2+) is required as a cofactor.

The protein resides in the plastid. It is found in the chloroplast. It carries out the reaction 9alpha-copalyl diphosphate = 9beta-pimara-7,15-diene + diphosphate. Its function is as follows. Involved in the biosynthesis of momilactone A and B phytoalexins. Catalyzes the conversion of syn-copalyl diphosphate to the phytoalexin precursor syn-pimara-7,15-diene. This chain is 9-beta-pimara-7,15-diene synthase, chloroplastic, found in Oryza sativa subsp. indica (Rice).